A 129-amino-acid polypeptide reads, in one-letter code: Large ribosomal subunit protein bL12c (129 aa).

This sequence belongs to the bacterial ribosomal protein bL12 family. Homodimer. Part of the ribosomal stalk of the 50S ribosomal subunit. Forms a multimeric L10(L12)X complex, where L10 forms an elongated spine to which 2 to 4 L12 dimers bind in a sequential fashion. Binds GTP-bound translation factors.

It is found in the plastid. Its subcellular location is the chloroplast. Functionally, forms part of the ribosomal stalk which helps the ribosome interact with GTP-bound translation factors. Is thus essential for accurate translation. The chain is Large ribosomal subunit protein bL12c from Pyropia yezoensis (Susabi-nori).